Here is a 313-residue protein sequence, read N- to C-terminus: Homoserine O-succinyltransferase (313 aa).

The active-site Acyl-thioester intermediate is the Cys-142. 2 residues coordinate substrate: Lys-163 and Ser-192. His-235 (proton acceptor) is an active-site residue. Residue Glu-237 is part of the active site. Arg-249 contacts substrate.

It belongs to the MetA family.

It is found in the cytoplasm. It catalyses the reaction L-homoserine + succinyl-CoA = O-succinyl-L-homoserine + CoA. The protein operates within amino-acid biosynthesis; L-methionine biosynthesis via de novo pathway; O-succinyl-L-homoserine from L-homoserine: step 1/1. In terms of biological role, transfers a succinyl group from succinyl-CoA to L-homoserine, forming succinyl-L-homoserine. The sequence is that of Homoserine O-succinyltransferase from Aliivibrio fischeri (strain MJ11) (Vibrio fischeri).